The following is a 444-amino-acid chain: Cytokine receptor-like factor 3 (444 aa).

Residues methionine 1 to leucine 65 are a coiled coil. The Fibronectin type-III domain maps to proline 177–proline 270.

It belongs to the cytokine receptor-like factor 3 family.

The protein localises to the cytoplasm. Its function is as follows. May play a role in the negative regulation of cell cycle progression. This chain is Cytokine receptor-like factor 3 (crlf3), found in Danio rerio (Zebrafish).